Reading from the N-terminus, the 937-residue chain is MORC family CW-type zinc finger protein 4 (937 aa).

A CW-type zinc finger spans residues 420–472 (KVPDQTWVQCDECLKWRKLPGKIDPSMLPARWFCYYNSHPKYRRCSVPEEQEL). Cys429, Cys432, Cys453, and Cys464 together coordinate Zn(2+). The disordered stretch occupies residues 606 to 637 (PEGENSHDKSSSERSTPPYLFPEYPEASKNTG). Positions 762–876 (KLKNQRELEE…LEMLQKAQVS (115 aa)) form a coiled coil.

In terms of tissue distribution, expressed at low levels in normal tissues, with highest expression levels in placenta and testis. Expression is significantly increased in subset of diffuse large B-cell lymphomas.

It localises to the nucleus. In terms of biological role, histone methylation reader which binds to non-methylated (H3K4me0), monomethylated (H3K4me1), dimethylated (H3K4me2) and trimethylated (H3K4me3) 'Lys-4' on histone H3. The order of binding preference is H3K4me3 &gt; H3K4me2 &gt; H3K4me1 &gt; H3K4me0. The protein is MORC family CW-type zinc finger protein 4 (MORC4) of Homo sapiens (Human).